Reading from the N-terminus, the 324-residue chain is Probable WRKY transcription factor 53 (324 aa).

Residues 93–126 (NPGSVPESPASINGSPRSEEFADGGGSSESHHRQ) are disordered. Residues 152 to 220 (GLEGPQDDVF…YRGTHTCSQA (69 aa)) constitute a DNA-binding region (WRKY).

This sequence belongs to the WRKY group III family. As to quaternary structure, interacts with ESR/ESP and UPL5. Binds to WRKY30. Post-translationally, ubiquitinated by UPL5. Ubiquitination leads to its subsequent degradation, thus controlling the timing of leaf senescence.

It localises to the nucleus. Its function is as follows. Transcription factor. Interacts specifically with the W box (5'-(T)TGAC[CT]-3'), a frequently occurring elicitor-responsive cis-acting element. May regulate the early events of leaf senescence. Negatively regulates the expression of ESR/ESP. Together with WRKY46 and WRKY70, promotes resistance to P.syringae, probably by enhancing salicylic acid (SA)- dependent genes. Contributes to the suppression of jasmonic acid (MeJA)-induced expression of PDF1.2. This is Probable WRKY transcription factor 53 from Arabidopsis thaliana (Mouse-ear cress).